The following is a 435-amino-acid chain: Succinate--CoA ligase [ADP-forming] subunit beta, mitochondrial (435 aa).

The transit peptide at 1-20 directs the protein to the mitochondrion; sequence MIGRISQPLLNTSQKFMAPA. In terms of domain architecture, ATP-grasp spans 32-259; it reads MKILQNYEIK…SNAEFRQAKL (228 aa). ATP-binding positions include K69 and 76–78; that span reads GRG. The Mg(2+) site is built by N229 and D243. Substrate is bound by residues N294 and 352 to 354; that span reads GIM.

This sequence belongs to the succinate/malate CoA ligase beta subunit family. ATP-specific subunit beta subfamily. Heterodimer of an alpha and a beta subunit. The beta subunit determines specificity for ATP. The cofactor is Mg(2+).

It is found in the mitochondrion. It catalyses the reaction succinate + ATP + CoA = succinyl-CoA + ADP + phosphate. The protein operates within carbohydrate metabolism; tricarboxylic acid cycle; succinate from succinyl-CoA (ligase route): step 1/1. In terms of biological role, ATP-specific succinyl-CoA synthetase functions in the citric acid cycle (TCA), coupling the hydrolysis of succinyl-CoA to the synthesis of ATP and thus represents the only step of substrate-level phosphorylation in the TCA. The beta subunit provides nucleotide specificity of the enzyme and binds the substrate succinate, while the binding sites for coenzyme A and phosphate are found in the alpha subunit. The chain is Succinate--CoA ligase [ADP-forming] subunit beta, mitochondrial from Caenorhabditis elegans.